The sequence spans 462 residues: Acetate--CoA ligase [ADP-forming] I subunit alpha (462 aa).

The protein belongs to the acetate CoA ligase alpha subunit family. In terms of assembly, heterotetramer of two alpha and two beta subunits.

It localises to the cytoplasm. The enzyme catalyses acetate + ATP + CoA = acetyl-CoA + ADP + phosphate. Activity is dependent on magnesium. Catalyzes the reversible formation of acetate and ATP from acetyl-CoA by using ADP and phosphate. Can use other substrates such as isobutyryl-CoA, propionyl-CoA and butyryl-CoA, but not indoleacetyl-CoA, phenylacetyl-CoA or succinyl-CoA. Seems to be involved primarily in the conversion of acetyl-CoA to acetate. Participates in the degradation of branched-chain amino acids via branched-chain-acyl-CoA esters. The protein is Acetate--CoA ligase [ADP-forming] I subunit alpha of Pyrococcus furiosus (strain ATCC 43587 / DSM 3638 / JCM 8422 / Vc1).